We begin with the raw amino-acid sequence, 103 residues long: uncharacterized protein (103 aa).

The CHCH domain occupies F10–Q63. Short sequence motifs (cx9C motif) lie at residues C13 to C23 and C45 to C55. 2 cysteine pairs are disulfide-bonded: C13-C55 and C23-C45. The span at T80–N90 shows a compositional bias: basic and acidic residues. Positions T80 to S103 are disordered. Positions N91 to S103 are enriched in polar residues.

It belongs to the TRIAP1/MDM35 family.

This is an uncharacterized protein from Caenorhabditis elegans.